Here is a 102-residue protein sequence, read N- to C-terminus: MALVEFLMETLDGLKGTDIVHFDVRGKSSITDNMIICTGTSSRQVSAMADNLITECKKAGFETFGEEGKNTADWIVVDLGQAIVHIMQRDAREMYQLEKLWA.

The protein belongs to the Iojap/RsfS family. Interacts with ribosomal protein uL14 (rplN).

It is found in the cytoplasm. In terms of biological role, functions as a ribosomal silencing factor. Interacts with ribosomal protein uL14 (rplN), blocking formation of intersubunit bridge B8. Prevents association of the 30S and 50S ribosomal subunits and the formation of functional ribosomes, thus repressing translation. The polypeptide is Ribosomal silencing factor RsfS (Haemophilus influenzae (strain ATCC 51907 / DSM 11121 / KW20 / Rd)).